A 296-amino-acid polypeptide reads, in one-letter code: Light-independent protochlorophyllide reductase iron-sulfur ATP-binding protein (296 aa).

ATP is bound by residues 39 to 44 (GIGKST) and lysine 68. A Mg(2+)-binding site is contributed by serine 43. [4Fe-4S] cluster-binding residues include cysteine 124 and cysteine 158. Residue 209–210 (NR) participates in ATP binding.

This sequence belongs to the NifH/BchL/ChlL family. Homodimer. Protochlorophyllide reductase is composed of three subunits; ChlL, ChlN and ChlB. It depends on [4Fe-4S] cluster as a cofactor.

The catalysed reaction is chlorophyllide a + oxidized 2[4Fe-4S]-[ferredoxin] + 2 ADP + 2 phosphate = protochlorophyllide a + reduced 2[4Fe-4S]-[ferredoxin] + 2 ATP + 2 H2O. It participates in porphyrin-containing compound metabolism; chlorophyll biosynthesis (light-independent). Its function is as follows. Component of the dark-operative protochlorophyllide reductase (DPOR) that uses Mg-ATP and reduced ferredoxin to reduce ring D of protochlorophyllide (Pchlide) to form chlorophyllide a (Chlide). This reaction is light-independent. The L component serves as a unique electron donor to the NB-component of the complex, and binds Mg-ATP. This Prochlorococcus marinus (strain SARG / CCMP1375 / SS120) protein is Light-independent protochlorophyllide reductase iron-sulfur ATP-binding protein.